Here is a 168-residue protein sequence, read N- to C-terminus: uncharacterized protein (168 aa).

The segment at 18-73 is disordered; the sequence is RTTVKTKSHNPKTLYPNNKPRWESKLHAGPKGFQSSRTSEKPGRPDPDPEDDPPIP. The span at 55-64 shows a compositional bias: basic and acidic residues; that stretch reads TSEKPGRPDP. Transmembrane regions (helical) follow at residues 84–104 and 113–133; these read IVVS…VLEV and VPLW…ALGI.

The protein localises to the membrane. This is an uncharacterized protein from Arabidopsis thaliana (Mouse-ear cress).